The primary structure comprises 138 residues: Ribosome-binding factor A (138 aa).

The disordered stretch occupies residues 112 to 138 (EARTQGQEPAADVEPAPGAAPDDEAEE). Low complexity predominate over residues 119 to 131 (EPAADVEPAPGAA).

It belongs to the RbfA family. As to quaternary structure, monomer. Binds 30S ribosomal subunits, but not 50S ribosomal subunits or 70S ribosomes.

It localises to the cytoplasm. Functionally, one of several proteins that assist in the late maturation steps of the functional core of the 30S ribosomal subunit. Associates with free 30S ribosomal subunits (but not with 30S subunits that are part of 70S ribosomes or polysomes). Required for efficient processing of 16S rRNA. May interact with the 5'-terminal helix region of 16S rRNA. This is Ribosome-binding factor A from Anaeromyxobacter dehalogenans (strain 2CP-C).